Here is a 126-residue protein sequence, read N- to C-terminus: MAKYTNDELLEAFGEMTLVELSEFVKAFEEKFDVEAAAPVAAVAAVAGAAAPAEEEKDEFDVILSAVGDKKIQVIKAVRAITSLGLAEAKALVDGAPKAVLEKAKKEDAEKAKAQLEEAGASVELK.

This sequence belongs to the bacterial ribosomal protein bL12 family. As to quaternary structure, homodimer. Part of the ribosomal stalk of the 50S ribosomal subunit. Forms a multimeric L10(L12)X complex, where L10 forms an elongated spine to which 2 to 4 L12 dimers bind in a sequential fashion. Binds GTP-bound translation factors.

Functionally, forms part of the ribosomal stalk which helps the ribosome interact with GTP-bound translation factors. Is thus essential for accurate translation. This Bifidobacterium longum subsp. infantis (strain ATCC 15697 / DSM 20088 / JCM 1222 / NCTC 11817 / S12) protein is Large ribosomal subunit protein bL12.